We begin with the raw amino-acid sequence, 288 residues long: Dysbindin protein homolog (288 aa).

Residues 147-239 (AQLQNSSQVL…QRERQAVFDD (93 aa)) adopt a coiled-coil conformation.

Belongs to the dysbindin family. Component of the biogenesis of lysosome-related organelles complex-1 (BLOC-1) composed of Blos1, Blos2, Blos3, Blos4, Dysb, Muted, Pldn and Snapin. Interacts with Pldn and Snapin.

In terms of biological role, component of the biogenesis of lysosome-related organelles complex-1 (BLOC-1) involved in pigment granule biogenesis and membrane trafficking in synapses. In response to high synaptic activity at neuromuscular junctions, stabilizes Pldn protein levels and, together with Pldn, plays a role in promoting efficient synaptic vesicle recycling and re-formation through early endosomes. This chain is Dysbindin protein homolog, found in Drosophila melanogaster (Fruit fly).